The primary structure comprises 153 residues: UPF0102 protein Pnap_0271 (153 aa).

Belongs to the UPF0102 family.

The sequence is that of UPF0102 protein Pnap_0271 from Polaromonas naphthalenivorans (strain CJ2).